A 78-amino-acid polypeptide reads, in one-letter code: DNA-directed RNA polymerase subunit Rpo5 (78 aa).

Belongs to the archaeal Rpo5/eukaryotic RPB5 RNA polymerase subunit family. In terms of assembly, part of the RNA polymerase complex.

The protein resides in the cytoplasm. It carries out the reaction RNA(n) + a ribonucleoside 5'-triphosphate = RNA(n+1) + diphosphate. Functionally, DNA-dependent RNA polymerase (RNAP) catalyzes the transcription of DNA into RNA using the four ribonucleoside triphosphates as substrates. This Methanothrix thermoacetophila (strain DSM 6194 / JCM 14653 / NBRC 101360 / PT) (Methanosaeta thermophila) protein is DNA-directed RNA polymerase subunit Rpo5.